The sequence spans 525 residues: MAEIKPAEISAILRKQVEGFESGATLEEVGTVLQVGDGIARVYGLSNVQYGELVEFDNGMEGIVLNLEEDNVGVVLLGPSTGIKEGSTAKRTQRIASLKVGEQMVGRVVNTLGFPIDGKGPIGGDLYEMPLERKAPGVIFRQPVTEPLQTGVKAVDAMIPVGRGQRELVIGDRQTGKSTVCIDTILNQKEFYDAGKPVFCIYVAIGQKASTVAGIAKMLEEKGAMAYTVIVAANASDPAPMQVYAPFAGAAIGEYFRDSGRPALIVYDDLSKQAVAYREVSLLLRRPPGREAYPGDVFYLHSRLLERACKVIADDGIAKNMNDLPESIKPIVKGGGSLTALPIIETQAGDVSAYIPTNVISITDGQIFLDGDLFNSGVRPAINVGISVSRVGGNAQIKSMKKVSGTLKLDQAQFRELEAFAKFGSDLDSVTLNVIEKGKRNVEILKQGLNDPYTVENQVAIIYAGSKNLLRNVPVEKVKEFEADFLAYLNSKHKDTLNALKAGKLDDSITDVIEKAAKEISAKYN.

171–178 (GDRQTGKS) contributes to the ATP binding site.

It belongs to the ATPase alpha/beta chains family. F-type ATPases have 2 components, CF(1) - the catalytic core - and CF(0) - the membrane proton channel. CF(1) has five subunits: alpha(3), beta(3), gamma(1), delta(1), epsilon(1). CF(0) has three main subunits: a(1), b(2) and c(9-12). The alpha and beta chains form an alternating ring which encloses part of the gamma chain. CF(1) is attached to CF(0) by a central stalk formed by the gamma and epsilon chains, while a peripheral stalk is formed by the delta and b chains.

It is found in the cell inner membrane. It catalyses the reaction ATP + H2O + 4 H(+)(in) = ADP + phosphate + 5 H(+)(out). Its function is as follows. Produces ATP from ADP in the presence of a proton gradient across the membrane. The alpha chain is a regulatory subunit. The protein is ATP synthase subunit alpha of Flavobacterium johnsoniae (strain ATCC 17061 / DSM 2064 / JCM 8514 / BCRC 14874 / CCUG 350202 / NBRC 14942 / NCIMB 11054 / UW101) (Cytophaga johnsonae).